Reading from the N-terminus, the 288-residue chain is Executioner caspase (288 aa).

Residue Cys-131 is part of the active site.

Belongs to the peptidase C14A family.

May induce host cell apoptosis and contribute of the establishment of a special cell cleavage process in which apoppotic bodies are rescued by the virus and differentiate to form large vesicles in which virion assembles. The protein is Executioner caspase of Spodoptera frugiperda ascovirus 1a (SfAV-1a).